Reading from the N-terminus, the 419-residue chain is Serine--tRNA ligase (419 aa).

Residue 225-227 (TAE) coordinates L-serine. 256 to 258 (RKE) contributes to the ATP binding site. Residue Glu279 participates in L-serine binding. 343–346 (EISS) lines the ATP pocket. Position 378 (Ser378) interacts with L-serine.

This sequence belongs to the class-II aminoacyl-tRNA synthetase family. Type-1 seryl-tRNA synthetase subfamily. In terms of assembly, homodimer. The tRNA molecule binds across the dimer.

The protein resides in the cytoplasm. It carries out the reaction tRNA(Ser) + L-serine + ATP = L-seryl-tRNA(Ser) + AMP + diphosphate + H(+). It catalyses the reaction tRNA(Sec) + L-serine + ATP = L-seryl-tRNA(Sec) + AMP + diphosphate + H(+). Its pathway is aminoacyl-tRNA biosynthesis; selenocysteinyl-tRNA(Sec) biosynthesis; L-seryl-tRNA(Sec) from L-serine and tRNA(Sec): step 1/1. Catalyzes the attachment of serine to tRNA(Ser). Is also able to aminoacylate tRNA(Sec) with serine, to form the misacylated tRNA L-seryl-tRNA(Sec), which will be further converted into selenocysteinyl-tRNA(Sec). The polypeptide is Serine--tRNA ligase (Pelagibacter ubique (strain HTCC1062)).